The chain runs to 607 residues: UvrABC system protein C (607 aa).

A GIY-YIG domain is found at 12-91 (DSPGVYLYKD…IKRYRPRYNI (80 aa)). Residues 200 to 235 (ENLIKKLKKEMAIASDNLEFERAAKLRDQILALEKI) enclose the UVR domain.

This sequence belongs to the UvrC family. In terms of assembly, interacts with UvrB in an incision complex.

Its subcellular location is the cytoplasm. Its function is as follows. The UvrABC repair system catalyzes the recognition and processing of DNA lesions. UvrC both incises the 5' and 3' sides of the lesion. The N-terminal half is responsible for the 3' incision and the C-terminal half is responsible for the 5' incision. This Carboxydothermus hydrogenoformans (strain ATCC BAA-161 / DSM 6008 / Z-2901) protein is UvrABC system protein C.